Reading from the N-terminus, the 339-residue chain is Uroporphyrinogen decarboxylase (339 aa).

Substrate contacts are provided by residues 23–27 (RQAGR), Asp-72, Tyr-147, Ser-202, and His-315.

It belongs to the uroporphyrinogen decarboxylase family. As to quaternary structure, homodimer.

It localises to the cytoplasm. The enzyme catalyses uroporphyrinogen III + 4 H(+) = coproporphyrinogen III + 4 CO2. It functions in the pathway porphyrin-containing compound metabolism; protoporphyrin-IX biosynthesis; coproporphyrinogen-III from 5-aminolevulinate: step 4/4. Its function is as follows. Catalyzes the decarboxylation of four acetate groups of uroporphyrinogen-III to yield coproporphyrinogen-III. The chain is Uroporphyrinogen decarboxylase from Desulfotalea psychrophila (strain LSv54 / DSM 12343).